A 207-amino-acid polypeptide reads, in one-letter code: Ribosomal RNA large subunit methyltransferase E (207 aa).

Residues glycine 61, tryptophan 63, aspartate 81, aspartate 97, and aspartate 122 each coordinate S-adenosyl-L-methionine. The active-site Proton acceptor is lysine 162.

This sequence belongs to the class I-like SAM-binding methyltransferase superfamily. RNA methyltransferase RlmE family.

It is found in the cytoplasm. The catalysed reaction is uridine(2552) in 23S rRNA + S-adenosyl-L-methionine = 2'-O-methyluridine(2552) in 23S rRNA + S-adenosyl-L-homocysteine + H(+). Specifically methylates the uridine in position 2552 of 23S rRNA at the 2'-O position of the ribose in the fully assembled 50S ribosomal subunit. This chain is Ribosomal RNA large subunit methyltransferase E, found in Pseudomonas putida (strain ATCC 700007 / DSM 6899 / JCM 31910 / BCRC 17059 / LMG 24140 / F1).